Reading from the N-terminus, the 541-residue chain is Testis-specific chromodomain protein Y 2 (541 aa).

One can recognise a Chromo domain in the interval 6–66; sequence FEVEAIVDKR…RQTEKQKKLT (61 aa). The interval 72 to 104 is disordered; the sequence is RIFSNNARRRTSRSTKANYSKNSPKTPVTDKHH. Polar residues predominate over residues 87-97; it reads KANYSKNSPKT.

Testis specific.

The protein resides in the nucleus. It catalyses the reaction L-lysyl-[protein] + acetyl-CoA = N(6)-acetyl-L-lysyl-[protein] + CoA + H(+). Its function is as follows. May have histone acetyltransferase activity. The sequence is that of Testis-specific chromodomain protein Y 2 (CDY2A) from Homo sapiens (Human).